We begin with the raw amino-acid sequence, 258 residues long: Ubiquinone/menaquinone biosynthesis C-methyltransferase UbiE (258 aa).

The interval 1–21 (MPESRTSADGGMETSYGFREV) is disordered. Residues Thr-81, Asp-102, and 130 to 131 (NA) contribute to the S-adenosyl-L-methionine site.

Belongs to the class I-like SAM-binding methyltransferase superfamily. MenG/UbiE family.

It catalyses the reaction a 2-demethylmenaquinol + S-adenosyl-L-methionine = a menaquinol + S-adenosyl-L-homocysteine + H(+). It carries out the reaction a 2-methoxy-6-(all-trans-polyprenyl)benzene-1,4-diol + S-adenosyl-L-methionine = a 5-methoxy-2-methyl-3-(all-trans-polyprenyl)benzene-1,4-diol + S-adenosyl-L-homocysteine + H(+). The protein operates within quinol/quinone metabolism; menaquinone biosynthesis; menaquinol from 1,4-dihydroxy-2-naphthoate: step 2/2. It functions in the pathway cofactor biosynthesis; ubiquinone biosynthesis. Functionally, methyltransferase required for the conversion of demethylmenaquinol (DMKH2) to menaquinol (MKH2) and the conversion of 2-polyprenyl-6-methoxy-1,4-benzoquinol (DDMQH2) to 2-polyprenyl-3-methyl-6-methoxy-1,4-benzoquinol (DMQH2). This is Ubiquinone/menaquinone biosynthesis C-methyltransferase UbiE from Rhizobium leguminosarum bv. trifolii (strain WSM2304).